A 168-amino-acid chain; its full sequence is Protein C2-DOMAIN ABA-RELATED 1 (168 aa).

Met-1 is subject to N-acetylmethionine. Residues 1–104 enclose the C2 domain; sequence MENLVGLLRI…EAIKFAHQLG (104 aa). Residues Arg-21, Asp-22, Asp-27, Asp-73, Tyr-74, Asp-75, and Asp-81 each coordinate Ca(2+).

This sequence belongs to the plant CAR protein family. In terms of assembly, dimers and oligomers. Binds to PYR/PYL/RCAR abscisic acid intracellular receptors in an ABA-independent manner, both at the plasma membrane and in the nucleus. Interacts directly with PYR1, PYL1, PYL4, PYL6 and PYL8. Binds phospholipids in a Ca(2+)-dependent manner. Requires Ca(2+) as cofactor. Expressed in roots.

The protein localises to the cell membrane. Its subcellular location is the nucleus. Functionally, stimulates the GTPase/ATPase activities of Obg-like ATPases. Mediates the transient calcium-dependent interaction of PYR/PYL/RCAR abscisic acid (ABA) receptors with the plasma membrane and thus regulates ABA sensitivity. Binds liposomes in the absence of exogenous Ca(2+), but this activity is enhanced in the presence of Ca(2+) and generates membrane curvature. The polypeptide is Protein C2-DOMAIN ABA-RELATED 1 (Arabidopsis thaliana (Mouse-ear cress)).